We begin with the raw amino-acid sequence, 271 residues long: N-acetylaspartate synthetase (271 aa).

A disordered region spans residues 1–38 (MTYRGTRKSPCCSPPPRCGPPLPSGPAGSALGPPSSGA). Positions 12 to 24 (CSPPPRCGPPLPS) are enriched in pro residues. Residues 25–37 (GPAGSALGPPSSG) are compositionally biased toward low complexity. The helical transmembrane segment at 89 to 109 (VYAVIIIMCFVVTKSLLVTCC) threads the bilayer. One can recognise an N-acetyltransferase domain in the interval 115–258 (LGMRYYYSRK…HSLLERLFFQ (144 aa)).

This sequence belongs to the NAT8 family.

Its subcellular location is the cytoplasm. It localises to the microsome membrane. The protein resides in the mitochondrion membrane. The protein localises to the endoplasmic reticulum membrane. It catalyses the reaction L-aspartate + acetyl-CoA = N-acetyl-L-aspartate + CoA + H(+). Functionally, catalyzes the synthesis of N-acetylaspartate acid (NAA) from L-aspartate and acetyl-CoA. This Xenopus tropicalis (Western clawed frog) protein is N-acetylaspartate synthetase (nat8l).